Reading from the N-terminus, the 760-residue chain is Histone-lysine N-methyltransferase EZH2 (760 aa).

Disordered regions lie at residues 208–231 and 356–444; these read KDDA…SKKF and PERA…PENV. Over residues 361–373 the composition is skewed to basic residues; the sequence is TPSKRSTGRRRGR. Over residues 375-388 the composition is skewed to polar residues; it reads PNSNSRPSTPTVNS. Residues 389 to 400 are compositionally biased toward basic and acidic residues; the sequence is ETKDTDSDREGG. In terms of domain architecture, CXC spans 517 to 619; sequence CRKIQLKKDG…SKNVSCKNCS (103 aa). The region spanning 626–741 is the SET domain; the sequence is KHLLLAPSDV…TGEELFFDYR (116 aa).

It belongs to the class V-like SAM-binding methyltransferase superfamily. Histone-lysine methyltransferase family. EZ subfamily. As to quaternary structure, component of the prc2/eed-ezh2 complex.

Its subcellular location is the nucleus. The catalysed reaction is L-lysyl(27)-[histone H3] + 3 S-adenosyl-L-methionine = N(6),N(6),N(6)-trimethyl-L-lysyl(27)-[histone H3] + 3 S-adenosyl-L-homocysteine + 3 H(+). Polycomb group (PcG) protein. Catalytic subunit of the prc2/eed-ezh2 complex, which methylates 'Lys-9' and 'Lys-27' of histone H3, leading to transcriptional repression of the affected target gene. May regulate the circadian clock via histone methylation at the promoter of the circadian genes. In Danio rerio (Zebrafish), this protein is Histone-lysine N-methyltransferase EZH2 (ezh2).